The chain runs to 494 residues: ATP synthase subunit alpha, chloroplastic (494 aa).

170–177 (GDRQTGKT) is an ATP binding site.

This sequence belongs to the ATPase alpha/beta chains family. In terms of assembly, F-type ATPases have 2 components, CF(1) - the catalytic core - and CF(0) - the membrane proton channel. CF(1) has five subunits: alpha(3), beta(3), gamma(1), delta(1), epsilon(1). CF(0) has four main subunits: a, b, b' and c.

Its subcellular location is the plastid. It is found in the chloroplast thylakoid membrane. It carries out the reaction ATP + H2O + 4 H(+)(in) = ADP + phosphate + 5 H(+)(out). In terms of biological role, produces ATP from ADP in the presence of a proton gradient across the membrane. The alpha chain is a regulatory subunit. This is ATP synthase subunit alpha, chloroplastic from Pinus thunbergii (Japanese black pine).